A 408-amino-acid chain; its full sequence is MATKLIKHGSKAREQMLEGIDILADAVKVTLGPKGRNVLIEQSFGSPKITKDGVTVAKSIELKDKIRNAGAQLLKSAATKAAEVAGDGTTTATVLARALAREGNKLVAAGYNPMDLKRGMDLAVNAVVEEIKKSSKKINSQEEIAQVGTISSNGDKEIGEKIAKAMEEVGKEGVITVEEAKNFSFDVEVVKGMMFDRGYLSPYFVTNSEKMVAELENPFILLFEKKLSNLQPMLPILEAVVQSQRPLLIIAEDVEGEALATLVVNRLRGGLKVAAVKAPGFGDRRKAMMEDIAILTKGELITEDLGMKLENVSIKSLGTAKRVTISKENTVIVDGNGDKKNIEDRVLQIKSQIAETTSDYDKEKLQERLAKLSGGVAVLKVGGATEVEVKERKDRVEDALAATRAAVE.

Residues 30-33 (TLGP), Lys-51, and 87-91 (DGTTT) each bind ATP.

It belongs to the chaperonin (HSP60) family. Forms a cylinder of 14 subunits composed of two heptameric rings stacked back-to-back. Interacts with the co-chaperonin GroES.

Its subcellular location is the cytoplasm. The enzyme catalyses ATP + H2O + a folded polypeptide = ADP + phosphate + an unfolded polypeptide.. Functionally, together with its co-chaperonin GroES, plays an essential role in assisting protein folding. The GroEL-GroES system forms a nano-cage that allows encapsulation of the non-native substrate proteins and provides a physical environment optimized to promote and accelerate protein folding. The sequence is that of Chaperonin GroEL from Rickettsia rickettsii.